The sequence spans 164 residues: Thiol peroxidase (164 aa).

Residues 16–162 (LQVGEIAHDF…YDAAIEAVKV (147 aa)) enclose the Thioredoxin domain. Cys-58 functions as the Cysteine sulfenic acid (-SOH) intermediate in the catalytic mechanism. A disulfide bond links Cys-58 and Cys-92.

The protein belongs to the peroxiredoxin family. Tpx subfamily. As to quaternary structure, homodimer.

It catalyses the reaction a hydroperoxide + [thioredoxin]-dithiol = an alcohol + [thioredoxin]-disulfide + H2O. Functionally, thiol-specific peroxidase that catalyzes the reduction of hydrogen peroxide and organic hydroperoxides to water and alcohols, respectively. Plays a role in cell protection against oxidative stress by detoxifying peroxides. The chain is Thiol peroxidase from Streptococcus parasanguinis.